A 510-amino-acid chain; its full sequence is GMP synthase [glutamine-hydrolyzing] (510 aa).

The Glutamine amidotransferase type-1 domain maps to 5 to 195; sequence PILVVNFGSQ…IYGVCKAEKN (191 aa). C82 (nucleophile) is an active-site residue. Catalysis depends on residues H169 and E171. Positions 196-385 constitute a GMPS ATP-PPase domain; sequence WEMGDFIHEK…LGVPEEILRR (190 aa). Residue 223 to 229 coordinates ATP; the sequence is SGGVDST.

Homodimer.

The enzyme catalyses XMP + L-glutamine + ATP + H2O = GMP + L-glutamate + AMP + diphosphate + 2 H(+). It functions in the pathway purine metabolism; GMP biosynthesis; GMP from XMP (L-Gln route): step 1/1. Catalyzes the synthesis of GMP from XMP. The sequence is that of GMP synthase [glutamine-hydrolyzing] (guaA) from Aquifex aeolicus (strain VF5).